Reading from the N-terminus, the 159-residue chain is NADH-quinone oxidoreductase subunit I (159 aa).

4Fe-4S ferredoxin-type domains are found at residues 50–80 and 90–119; these read QRRY…IESE and KRYD…ETHI. Residues C60, C63, C66, C70, C99, C102, C105, and C109 each contribute to the [4Fe-4S] cluster site.

The protein belongs to the complex I 23 kDa subunit family. NDH-1 is composed of 14 different subunits. Subunits NuoA, H, J, K, L, M, N constitute the membrane sector of the complex. [4Fe-4S] cluster is required as a cofactor.

The protein resides in the cell inner membrane. It catalyses the reaction a quinone + NADH + 5 H(+)(in) = a quinol + NAD(+) + 4 H(+)(out). Its function is as follows. NDH-1 shuttles electrons from NADH, via FMN and iron-sulfur (Fe-S) centers, to quinones in the respiratory chain. The immediate electron acceptor for the enzyme in this species is believed to be ubiquinone. Couples the redox reaction to proton translocation (for every two electrons transferred, four hydrogen ions are translocated across the cytoplasmic membrane), and thus conserves the redox energy in a proton gradient. In Neisseria meningitidis serogroup A / serotype 4A (strain DSM 15465 / Z2491), this protein is NADH-quinone oxidoreductase subunit I.